The chain runs to 152 residues: Transcriptional repressor NrdR (152 aa).

The segment at 3-34 is a zinc-finger region; sequence CPFCSTEETKVIDSRLVSEGYQVRRRRECTNC. The 91-residue stretch at 49 to 139 folds into the ATP-cone domain; the sequence is PKIVKTDGYR…VYLSFENINE (91 aa).

This sequence belongs to the NrdR family. It depends on Zn(2+) as a cofactor.

Negatively regulates transcription of bacterial ribonucleotide reductase nrd genes and operons by binding to NrdR-boxes. The chain is Transcriptional repressor NrdR from Actinobacillus succinogenes (strain ATCC 55618 / DSM 22257 / CCUG 43843 / 130Z).